Consider the following 203-residue polypeptide: Ras-related protein Rab-7a (203 aa).

Residues 15–22, 34–40, 63–67, 125–128, and 157–158 contribute to the GTP site; these read GDSGVGKT, SNQYKAT, DTAGQ, NKID, and AK. An Effector region motif is present at residues 37 to 45; the sequence is YKATIGADF. 2 S-geranylgeranyl cysteine lipidation sites follow: cysteine 202 and cysteine 203.

It belongs to the small GTPase superfamily. Rab family.

The protein localises to the late endosome membrane. It localises to the lysosome membrane. Its subcellular location is the cytoplasmic vesicle. The protein resides in the autophagosome membrane. It is found in the lipid droplet. It catalyses the reaction GTP + H2O = GDP + phosphate + H(+). Its function is as follows. Small GTPase which cycles between active GTP-bound and inactive GDP-bound states. In its active state, binds to a variety of effector proteins playing a key role in the regulation of endo-lysosomal trafficking. Governs early-to-late endosomal maturation, microtubule minus-end as well as plus-end directed endosomal migration and positioning, and endosome-lysosome transport through different protein-protein interaction cascades. Involved in lipophagy, a cytosolic lipase-independent autophagic pathway. This chain is Ras-related protein Rab-7a (rab7A), found in Dictyostelium discoideum (Social amoeba).